Reading from the N-terminus, the 200-residue chain is MLAFCRSSLKSKKYFIILLALAAIAGLGTHAAWSSNGLPRIDNKTLARLAQQHPVVVLFRHAERCDRSTNQCLSDKTGITVKGTQDARELGNAFSADIPDFDLYSSNTVRTIQSATWFSAGKKLTVDKRFLQCGNEIYSAIKDLQRKAPDKNIVIFTHNHCLTYIAKDKRDATFKPDYLDGLVMHVEKGKVYLDGEFVNH.

The first 25 residues, 1 to 25 (MLAFCRSSLKSKKYFIILLALAAIA), serve as a signal peptide directing secretion.

It belongs to the phosphoglycerate mutase family. Ais subfamily.

It is found in the periplasm. Its pathway is bacterial outer membrane biogenesis; lipopolysaccharide metabolism. Its function is as follows. Catalyzes the dephosphorylation of heptose(II) of the outer membrane lipopolysaccharide core. This is Lipopolysaccharide core heptose(II)-phosphate phosphatase from Escherichia coli O6:H1 (strain CFT073 / ATCC 700928 / UPEC).